Here is a 37-residue protein sequence, read N- to C-terminus: Photosystem II reaction center protein T (37 aa).

A helical membrane pass occupies residues 3 to 23; that stretch reads ALVYTFLLVGTLGIIFFAIFF.

Belongs to the PsbT family. As to quaternary structure, PSII is composed of 1 copy each of membrane proteins PsbA, PsbB, PsbC, PsbD, PsbE, PsbF, PsbH, PsbI, PsbJ, PsbK, PsbL, PsbM, PsbT, PsbY, PsbZ, Psb30/Ycf12, at least 3 peripheral proteins of the oxygen-evolving complex and a large number of cofactors. It forms dimeric complexes.

The protein localises to the plastid. Its subcellular location is the chloroplast thylakoid membrane. Found at the monomer-monomer interface of the photosystem II (PS II) dimer, plays a role in assembly and dimerization of PSII. PSII is a light-driven water plastoquinone oxidoreductase, using light energy to abstract electrons from H(2)O, generating a proton gradient subsequently used for ATP formation. This is Photosystem II reaction center protein T from Spirogyra maxima (Green alga).